Here is a 394-residue protein sequence, read N- to C-terminus: Cell division protein FtsZ (394 aa).

Residues 21-25, 108-110, E139, R143, and D187 each bind GTP; these read GGGGN and GTG.

Belongs to the FtsZ family. As to quaternary structure, homodimer. Polymerizes to form a dynamic ring structure in a strictly GTP-dependent manner. Interacts directly with several other division proteins. Interacts with the SulA inhibitor.

The protein localises to the cytoplasm. Its function is as follows. Essential cell division protein that forms a contractile ring structure (Z ring) at the future cell division site. The regulation of the ring assembly controls the timing and the location of cell division. One of the functions of the FtsZ ring is to recruit other cell division proteins to the septum to produce a new cell wall between the dividing cells. Binds GTP and shows GTPase activity. The chain is Cell division protein FtsZ from Pseudomonas aeruginosa (strain ATCC 15692 / DSM 22644 / CIP 104116 / JCM 14847 / LMG 12228 / 1C / PRS 101 / PAO1).